A 437-amino-acid polypeptide reads, in one-letter code: Beta-1,3-galactosyl-O-glycosyl-glycoprotein beta-1,6-N-acetylglucosaminyltransferase 3 (437 aa).

Residues 1–6 lie on the Cytoplasmic side of the membrane; it reads MVSWRR. The helical; Signal-anchor for type II membrane protein transmembrane segment at 7–27 threads the bilayer; that stretch reads FCWHYHGWTLGCYMLLAIIAL. Residues 28–437 are Lumenal-facing; sequence KLSLRLKCDF…RHKAIYGTEL (410 aa). 4 disulfide bridges follow: C70–C227, C161–C381, C182–C209, and C390–C422. N-linked (GlcNAc...) asparagine glycosylation is present at N288.

The protein belongs to the glycosyltransferase 14 family. In terms of processing, N-glycosylated.

The protein resides in the golgi apparatus membrane. The enzyme catalyses a 3-O-[beta-D-galactosyl-(1-&gt;3)-N-acetyl-alpha-D-galactosaminyl]-L-seryl-[protein] + UDP-N-acetyl-alpha-D-glucosamine = 3-O-{beta-D-galactosyl-(1-&gt;3)-[N-acetyl-beta-D-glucosaminyl-(1-&gt;6)]-N-acetyl-alpha-D-galactosaminyl}-L-seryl-[protein] + UDP + H(+). It carries out the reaction a 3-O-[beta-D-galactosyl-(1-&gt;3)-N-acetyl-alpha-D-galactosaminyl]-L-threonyl-[protein] + UDP-N-acetyl-alpha-D-glucosamine = a 3-O-{beta-D-galactosyl-(1-&gt;3)-[N-acetyl-beta-D-glucosaminyl-(1-&gt;6)]-N-acetyl-alpha-D-galactosaminyl}-L-threonyl-[protein] + UDP + H(+). The catalysed reaction is a beta-D-Gal-(1-&gt;4)-beta-D-GlcNAc-(1-&gt;3)-beta-D-Gal-(1-&gt;4)-beta-D-GlcNAc derivative + UDP-N-acetyl-alpha-D-glucosamine = a beta-D-Gal-(1-&gt;4)-beta-D-GlcNAc-(1-&gt;3)-[beta-D-GlcNAc-(1-&gt;6)]-beta-D-Gal-(1-&gt;4)-N-acetyl-beta-D-glucosaminyl derivative + UDP + H(+). It catalyses the reaction 3-O-[N-acetyl-beta-D-glucosaminyl-(1-&gt;3)-N-acetyl-alpha-D-galactosaminyl]-L-seryl-[protein] + UDP-N-acetyl-alpha-D-glucosamine = 3-O-[N-acetyl-beta-D-glucosaminyl-(1-&gt;3)-[N-acetyl-beta-D-glucosaminyl-(1-&gt;6)]-N-acetyl-alpha-D-galactosaminyl]-L-seryl-[protein] + UDP + H(+). The enzyme catalyses a 3-O-[N-acetyl-beta-D-glucosaminyl-(1-&gt;3)-N-acetyl-alpha-D-galactosaminyl]-L-threonyl-[protein] + UDP-N-acetyl-alpha-D-glucosamine = 3-O-[N-acetyl-beta-D-glucosaminyl-(1-&gt;3)-[N-acetyl-beta-D-glucosaminyl-(1-&gt;6)]-N-acetyl-alpha-D-galactosaminyl]-L-threonyl-[protein] + UDP + H(+). It participates in protein modification; protein glycosylation. Glycosyltransferase that can synthesize all known mucin beta 6 N-acetylglucosaminides. Mediates core 2 and core 4 O-glycan branching, 2 important steps in mucin-type biosynthesis. Also has I-branching enzyme activity by converting linear into branched poly-N-acetyllactosaminoglycans, leading to introduce the blood group I antigen during embryonic development. This is Beta-1,3-galactosyl-O-glycosyl-glycoprotein beta-1,6-N-acetylglucosaminyltransferase 3 (Gcnt3) from Rattus norvegicus (Rat).